We begin with the raw amino-acid sequence, 87 residues long: HssA/B-like protein 7 (87 aa).

Residues 1-22 (MSILSALTSISNPMKSTKSSVA) show a composition bias toward polar residues. Residues 1-23 (MSILSALTSISNPMKSTKSSVAN) are disordered.

Belongs to the hssA/B family.

The sequence is that of HssA/B-like protein 7 (hssl7) from Dictyostelium discoideum (Social amoeba).